The chain runs to 626 residues: Chaperone protein DnaK (626 aa).

The residue at position 175 (threonine 175) is a Phosphothreonine; by autocatalysis. Positions 586–606 (GAEGAAAGADGAGASAGSASG) are enriched in low complexity. The segment at 586–626 (GAEGAAAGADGAGASAGSASGSDDDTVEAEVVDDDDDKDNK) is disordered. Over residues 607 to 626 (SDDDTVEAEVVDDDDDKDNK) the composition is skewed to acidic residues.

It belongs to the heat shock protein 70 family.

Functionally, acts as a chaperone. The chain is Chaperone protein DnaK from Bifidobacterium longum (strain DJO10A).